The sequence spans 574 residues: Serine hydroxymethyltransferase (574 aa).

A (6S)-5,6,7,8-tetrahydrofolate-binding site is contributed by 180-182 (GHL). Lys288 bears the N6-(pyridoxal phosphate)lysine mark. Glu306 is a binding site for (6S)-5,6,7,8-tetrahydrofolate.

This sequence belongs to the SHMT family. As to quaternary structure, homodimer. It depends on pyridoxal 5'-phosphate as a cofactor.

It is found in the cytoplasm. It catalyses the reaction (6R)-5,10-methylene-5,6,7,8-tetrahydrofolate + glycine + H2O = (6S)-5,6,7,8-tetrahydrofolate + L-serine. It functions in the pathway one-carbon metabolism; tetrahydrofolate interconversion. The protein operates within amino-acid biosynthesis; glycine biosynthesis; glycine from L-serine: step 1/1. In terms of biological role, catalyzes the reversible interconversion of serine and glycine with tetrahydrofolate (THF) serving as the one-carbon carrier. This reaction serves as the major source of one-carbon groups required for the biosynthesis of purines, thymidylate, methionine, and other important biomolecules. Also exhibits THF-independent aldolase activity toward beta-hydroxyamino acids, producing glycine and aldehydes, via a retro-aldol mechanism. This Treponema pallidum (strain Nichols) protein is Serine hydroxymethyltransferase.